The following is a 439-amino-acid chain: uncharacterized protein (439 aa).

28 to 35 serves as a coordination point for ATP; the sequence is GRRRIGKT.

This is an uncharacterized protein from Methanocaldococcus jannaschii (strain ATCC 43067 / DSM 2661 / JAL-1 / JCM 10045 / NBRC 100440) (Methanococcus jannaschii).